A 331-amino-acid polypeptide reads, in one-letter code: Probable allantoicase (331 aa).

Belongs to the allantoicase family.

It carries out the reaction allantoate + H2O = (S)-ureidoglycolate + urea. Its pathway is nitrogen metabolism; (S)-allantoin degradation; (S)-ureidoglycolate from allantoate (aminidohydrolase route): step 1/1. This chain is Probable allantoicase, found in Pseudomonas syringae pv. syringae (strain B728a).